A 462-amino-acid chain; its full sequence is Glycine--tRNA ligase (462 aa).

Substrate-binding residues include Arg100 and Glu175. ATP-binding positions include 207 to 209, 217 to 222, 291 to 292, and 335 to 338; these read RNE, FRTREF, EL, and GADR. 222-226 lines the substrate pocket; the sequence is FEQME. Residue 331–335 coordinates substrate; sequence EPSLG.

Belongs to the class-II aminoacyl-tRNA synthetase family. As to quaternary structure, homodimer.

It localises to the cytoplasm. The enzyme catalyses tRNA(Gly) + glycine + ATP = glycyl-tRNA(Gly) + AMP + diphosphate. Functionally, catalyzes the attachment of glycine to tRNA(Gly). The protein is Glycine--tRNA ligase of Clostridium acetobutylicum (strain ATCC 824 / DSM 792 / JCM 1419 / IAM 19013 / LMG 5710 / NBRC 13948 / NRRL B-527 / VKM B-1787 / 2291 / W).